A 743-amino-acid polypeptide reads, in one-letter code: 1,4-alpha-glucan branching enzyme GlgB (743 aa).

The active-site Nucleophile is Asp-416. The active-site Proton donor is the Glu-469.

This sequence belongs to the glycosyl hydrolase 13 family. GlgB subfamily. Monomer.

It carries out the reaction Transfers a segment of a (1-&gt;4)-alpha-D-glucan chain to a primary hydroxy group in a similar glucan chain.. The protein operates within glycan biosynthesis; glycogen biosynthesis. Its function is as follows. Catalyzes the formation of the alpha-1,6-glucosidic linkages in glycogen by scission of a 1,4-alpha-linked oligosaccharide from growing alpha-1,4-glucan chains and the subsequent attachment of the oligosaccharide to the alpha-1,6 position. This chain is 1,4-alpha-glucan branching enzyme GlgB, found in Shewanella baltica (strain OS195).